The primary structure comprises 281 residues: BEN domain-containing protein 6 (281 aa).

Disordered regions lie at residues 15–62 (VLRK…ETPL) and 143–172 (SFASLCSNSNSTSSSPSSVKAEEEQHPGEK). The stretch at 19–99 (RKRKRTETAN…RLRQSLVMLQ (81 aa)) forms a coiled coil. The segment covering 143–160 (SFASLCSNSNSTSSSPSS) has biased composition (low complexity). Basic and acidic residues predominate over residues 162–172 (KAEEEQHPGEK). Positions 171-271 (EKQFTIERWQ…NCTKKPNASK (101 aa)) constitute a BEN domain.

In terms of assembly, interacts (via BEN domain) with RBPJ.

It localises to the nucleus. Its function is as follows. Acts as a corepressor of recombining binding protein suppressor hairless (RBPJ) and inhibits Notch signaling in neural stem cells, thereby opposing their self-renewal and promoting neurogenesis. In Mus musculus (Mouse), this protein is BEN domain-containing protein 6 (Bend6).